The primary structure comprises 63 residues: Large ribosomal subunit protein uL29 (63 aa).

This sequence belongs to the universal ribosomal protein uL29 family.

The sequence is that of Large ribosomal subunit protein uL29 from Mannheimia succiniciproducens (strain KCTC 0769BP / MBEL55E).